The sequence spans 86 residues: Electron transfer flavoprotein regulatory factor 1 (86 aa).

The protein belongs to the complex I LYR family. Homotetramer. Interacts with NDUFAB1. Interacts with ETFA. Interacts with ETFB.

It localises to the mitochondrion. Its function is as follows. Acts as a regulator of the electron transfer flavoprotein by promoting the removal of flavin from the ETF holoenzyme (composed of ETFA and ETFB). The chain is Electron transfer flavoprotein regulatory factor 1 from Mus musculus (Mouse).